The sequence spans 135 residues: Large ribosomal subunit protein bL21 (135 aa).

The interval 114-135 is disordered; the sequence is EAEKETPVLDETPAEEVETAAE. A compositionally biased stretch (acidic residues) spans 125–135; it reads TPAEEVETAAE.

It belongs to the bacterial ribosomal protein bL21 family. As to quaternary structure, part of the 50S ribosomal subunit. Contacts protein L20.

In terms of biological role, this protein binds to 23S rRNA in the presence of protein L20. This Nostoc punctiforme (strain ATCC 29133 / PCC 73102) protein is Large ribosomal subunit protein bL21.